Reading from the N-terminus, the 377-residue chain is Probable isocitrate dehydrogenase [NAD] subunit alpha, mitochondrial (377 aa).

The substrate site is built by Arg131, Arg141, Arg162, and Asp249. 3 residues coordinate Mg(2+): Asp249, Asp273, and Asp277.

Belongs to the isocitrate and isopropylmalate dehydrogenases family. Heterooligomer of subunits alpha, beta, and gamma in the apparent ratio of 2:1:1. Mg(2+) is required as a cofactor. It depends on Mn(2+) as a cofactor.

The protein resides in the mitochondrion. It catalyses the reaction D-threo-isocitrate + NAD(+) = 2-oxoglutarate + CO2 + NADH. Its function is as follows. Probable catalytic subunit of the enzyme which catalyzes the decarboxylation of isocitrate (ICT) into alpha-ketoglutarate. The polypeptide is Probable isocitrate dehydrogenase [NAD] subunit alpha, mitochondrial (Drosophila melanogaster (Fruit fly)).